A 273-amino-acid polypeptide reads, in one-letter code: Bis(5'-nucleosyl)-tetraphosphatase, symmetrical (273 aa).

The protein belongs to the Ap4A hydrolase family.

The enzyme catalyses P(1),P(4)-bis(5'-adenosyl) tetraphosphate + H2O = 2 ADP + 2 H(+). Its function is as follows. Hydrolyzes diadenosine 5',5'''-P1,P4-tetraphosphate to yield ADP. In Histophilus somni (strain 2336) (Haemophilus somnus), this protein is Bis(5'-nucleosyl)-tetraphosphatase, symmetrical.